The sequence spans 229 residues: Potassium/proton antiporter CemA (229 aa).

3 helical membrane-spanning segments follow: residues 7–27 (LNPL…SLSF), 106–126 (IILH…YSIL), and 189–209 (IISG…KYWI).

Belongs to the CemA family.

The protein resides in the plastid. It is found in the chloroplast inner membrane. It carries out the reaction K(+)(in) + H(+)(out) = K(+)(out) + H(+)(in). In terms of biological role, contributes to K(+)/H(+) antiport activity by supporting proton efflux to control proton extrusion and homeostasis in chloroplasts in a light-dependent manner to modulate photosynthesis. Prevents excessive induction of non-photochemical quenching (NPQ) under continuous-light conditions. Indirectly promotes efficient inorganic carbon uptake into chloroplasts. This chain is Potassium/proton antiporter CemA, found in Nymphaea alba (White water-lily).